The primary structure comprises 342 residues: MRITEGSAVIEVPEAYSGPGRRSPGFYNADQVLNRDLTIDLINEFGVEKVLDGFGGSGVRGIRISLETKAKVVIAEISPSSCEIIKQNIAINNAEADLIHDNFQCVSSHIAFDYIDVDPYGSPVPYLDAAIMNVRKGGYLGITATDQSTLTGSTLNKTRRRYGAYIVNDIYRHEMGIRTLIGYIARRAAAFDRYIEPQLSIWNHHYYRVFVKVGKGVNGADKMIENIGYLNKHTTIDNSFKDVNEGPVWLSNLNNAELLEKIRDPRVSKKIEMIKHDNRLLFVDLTDIARKTSLSLPPLAKVMDEIMKHGYEAHRTSFSPTGIKTDCPYAEVSEILKAYAKR.

The Trm1 methyltransferase domain maps to 1-336 (MRITEGSAVI…CPYAEVSEIL (336 aa)). Arginine 35, arginine 60, and glutamate 76 together coordinate S-adenosyl-L-methionine.

This sequence belongs to the class I-like SAM-binding methyltransferase superfamily. Trm1 family.

The catalysed reaction is guanosine(26) in tRNA + 2 S-adenosyl-L-methionine = N(2)-dimethylguanosine(26) in tRNA + 2 S-adenosyl-L-homocysteine + 2 H(+). In terms of biological role, dimethylates a single guanine residue at position 26 of a number of tRNAs using S-adenosyl-L-methionine as donor of the methyl groups. This Thermoplasma volcanium (strain ATCC 51530 / DSM 4299 / JCM 9571 / NBRC 15438 / GSS1) protein is tRNA (guanine(26)-N(2))-dimethyltransferase.